The sequence spans 249 residues: Cytoplasmic envelopment protein 1 (249 aa).

The protein belongs to the herpesviridae cytoplasmic envelopment protein 1 family.

The protein resides in the virion. It is found in the virion tegument. The protein localises to the host cytoplasm. Its subcellular location is the host Golgi apparatus. Plays a critical role in cytoplasmic virus egress. Participates in the final step of tegumentation and envelope acquisition within the host cytoplasm. This chain is Cytoplasmic envelopment protein 1 (UL103), found in Homo sapiens (Human).